The primary structure comprises 371 residues: Putative glutamate--cysteine ligase 2 (371 aa).

Belongs to the glutamate--cysteine ligase type 2 family. YbdK subfamily.

It carries out the reaction L-cysteine + L-glutamate + ATP = gamma-L-glutamyl-L-cysteine + ADP + phosphate + H(+). In terms of biological role, ATP-dependent carboxylate-amine ligase which exhibits weak glutamate--cysteine ligase activity. This Burkholderia multivorans (strain ATCC 17616 / 249) protein is Putative glutamate--cysteine ligase 2.